Reading from the N-terminus, the 403-residue chain is Presqualene diphosphate synthase (403 aa).

Residues Asp-84, Glu-87, and Asp-88 each contribute to the Mg(2+) site.

This sequence belongs to the phytoene/squalene synthase family. Mg(2+) is required as a cofactor.

It catalyses the reaction 2 (2E,6E)-farnesyl diphosphate = presqualene diphosphate + diphosphate. Catalyzes the biosynthesis of presqualene diphosphate (PSPP). Works in combination with SSL-2 or SSL-3 to produce respectively squalene or botryococcene. In most other species, farnesyl diphosphate (FPP) is converted into squalene in a two-step reaction by a single enzyme. This is Presqualene diphosphate synthase (SSL-1) from Botryococcus braunii (Green alga).